Here is a 149-residue protein sequence, read N- to C-terminus: Oligosaccharyltransferase complex subunit OSTC (149 aa).

Over 1-32 (MESLYRVPFLVLECPNLKLKKPPWVHMPSAMT) the chain is Cytoplasmic. A helical transmembrane segment spans residues 33-53 (VYALVVVSYFLITGGIIYDVI). At 54–83 (VEPPSVGSVTDEHGHQRPVAFLAYRVNGQY) the chain is on the extracellular side. The chain crosses the membrane as a helical span at residues 84 to 104 (IMEGLASSFLFTMGGLGFIIL). The Cytoplasmic portion of the chain corresponds to 105-117 (DRSNAPNIPKLNR). Residues 118-138 (FLLLFIGFVCVLLSFFMARVF) form a helical membrane-spanning segment. Residues 139-149 (MRMKLPGYLMG) lie on the Extracellular side of the membrane.

It belongs to the OSTC family. As to quaternary structure, component of STT3A-containing oligosaccharyl transferase (OST-A) complex. STT3A-containing complex assembly occurs through the formation of 3 subcomplexes. Subcomplex 1 contains RPN1 and TMEM258, subcomplex 2 contains the STT3A-specific subunits STT3A, DC2/OSTC, and KCP2 as well as the core subunit OST4, and subcomplex 3 contains RPN2, DAD1, and OST48. The OST-A complex can form stable complexes with the Sec61 complex or with both the Sec61 and TRAP complexes. Interacts with PSEN1 and NCSTN; indicative for an association with the gamma-secretase complex.

It localises to the endoplasmic reticulum. The protein localises to the membrane. It participates in protein modification; protein glycosylation. Functionally, subunit of STT3A-containing oligosaccharyl transferase (OST-A) complex that catalyzes the initial transfer of a defined glycan (Glc(3)Man(9)GlcNAc(2) in eukaryotes) from the lipid carrier dolichol-pyrophosphate to an asparagine residue within an Asn-X-Ser/Thr consensus motif in nascent polypeptide chains, the first step in protein N-glycosylation. N-glycosylation occurs cotranslationally and the complex associates with the Sec61 complex at the channel-forming translocon complex that mediates protein translocation across the endoplasmic reticulum (ER). Within the OST-A complex, acts as an adapter that anchors the OST-A complex to the Sec61 complex. May be involved in N-glycosylation of APP (amyloid-beta precursor protein). Can modulate gamma-secretase cleavage of APP by enhancing endoprotelysis of PSEN1. The protein is Oligosaccharyltransferase complex subunit OSTC of Bos taurus (Bovine).